Reading from the N-terminus, the 219-residue chain is 2-hydroxy-3-keto-5-methylthiopentenyl-1-phosphate phosphatase (219 aa).

It belongs to the HAD-like hydrolase superfamily. MtnX family.

It carries out the reaction 2-hydroxy-5-methylsulfanyl-3-oxopent-1-enyl phosphate + H2O = 1,2-dihydroxy-5-(methylsulfanyl)pent-1-en-3-one + phosphate. The protein operates within amino-acid biosynthesis; L-methionine biosynthesis via salvage pathway; L-methionine from S-methyl-5-thio-alpha-D-ribose 1-phosphate: step 4/6. Its function is as follows. Dephosphorylates 2-hydroxy-3-keto-5-methylthiopentenyl-1-phosphate (HK-MTPenyl-1-P) yielding 1,2-dihydroxy-3-keto-5-methylthiopentene (DHK-MTPene). The chain is 2-hydroxy-3-keto-5-methylthiopentenyl-1-phosphate phosphatase from Bacillus cereus (strain ATCC 10987 / NRS 248).